The chain runs to 140 residues: uncharacterized protein (140 aa).

Asn-36 is a glycosylation site (N-linked (GlcNAc...) asparagine). The helical transmembrane segment at Leu-91 to Phe-107 threads the bilayer. A compositionally biased stretch (polar residues) spans Gln-113 to Asn-122. The tract at residues Gln-113 to Gln-140 is disordered. A compositionally biased stretch (acidic residues) spans Thr-131–Gln-140.

It is found in the endoplasmic reticulum membrane. This is an uncharacterized protein from Saccharomyces cerevisiae (strain ATCC 204508 / S288c) (Baker's yeast).